A 60-amino-acid polypeptide reads, in one-letter code: uncharacterized protein (60 aa).

The helical transmembrane segment at 27–49 threads the bilayer; the sequence is YYWLVSTARMVLGVTILILILIG.

The protein localises to the membrane. This is an uncharacterized protein from Archaeoglobus fulgidus (strain ATCC 49558 / DSM 4304 / JCM 9628 / NBRC 100126 / VC-16).